A 554-amino-acid polypeptide reads, in one-letter code: Glucose-6-phosphate isomerase (554 aa).

Glu359 serves as the catalytic Proton donor. Residues His390 and Lys518 contribute to the active site.

It belongs to the GPI family.

Its subcellular location is the cytoplasm. It catalyses the reaction alpha-D-glucose 6-phosphate = beta-D-fructose 6-phosphate. Its pathway is carbohydrate biosynthesis; gluconeogenesis. It functions in the pathway carbohydrate degradation; glycolysis; D-glyceraldehyde 3-phosphate and glycerone phosphate from D-glucose: step 2/4. Catalyzes the reversible isomerization of glucose-6-phosphate to fructose-6-phosphate. The sequence is that of Glucose-6-phosphate isomerase from Pseudomonas putida (strain ATCC 700007 / DSM 6899 / JCM 31910 / BCRC 17059 / LMG 24140 / F1).